Here is a 303-residue protein sequence, read N- to C-terminus: Quinolinate synthase (303 aa).

His-23 and Ser-40 together coordinate iminosuccinate. Cys-85 contributes to the [4Fe-4S] cluster binding site. Residues 111–113 (YIN) and Ser-128 each bind iminosuccinate. Cys-171 provides a ligand contact to [4Fe-4S] cluster. Iminosuccinate contacts are provided by residues 197 to 199 (HPE) and Thr-214. Cys-259 provides a ligand contact to [4Fe-4S] cluster.

It belongs to the quinolinate synthase family. Type 2 subfamily. [4Fe-4S] cluster is required as a cofactor.

The protein resides in the cytoplasm. The enzyme catalyses iminosuccinate + dihydroxyacetone phosphate = quinolinate + phosphate + 2 H2O + H(+). The protein operates within cofactor biosynthesis; NAD(+) biosynthesis; quinolinate from iminoaspartate: step 1/1. Its function is as follows. Catalyzes the condensation of iminoaspartate with dihydroxyacetone phosphate to form quinolinate. The chain is Quinolinate synthase from Clostridium acetobutylicum (strain ATCC 824 / DSM 792 / JCM 1419 / IAM 19013 / LMG 5710 / NBRC 13948 / NRRL B-527 / VKM B-1787 / 2291 / W).